A 120-amino-acid polypeptide reads, in one-letter code: Spermidine export protein MdtJ (120 aa).

The next 4 membrane-spanning stretches (helical) occupy residues 1-21, 31-51, 54-74, and 81-101; these read MFYW…TLSM, TGFI…SFAV, IALG…ITLF, and EALS…IVLI.

This sequence belongs to the drug/metabolite transporter (DMT) superfamily. Small multidrug resistance (SMR) (TC 2.A.7.1) family. MdtJ subfamily. In terms of assembly, forms a complex with MdtI.

Its subcellular location is the cell inner membrane. Catalyzes the excretion of spermidine. The sequence is that of Spermidine export protein MdtJ from Enterobacter sp. (strain 638).